The chain runs to 261 residues: Kallikrein 1-related peptidase b21 (261 aa).

The N-terminal stretch at 1–17 is a signal peptide; the sequence is MRFLILFLALSLGEIDA. The propeptide at 18–24 is activation peptide; sequence APPVQSR. Residues 25-258 enclose the Peptidase S1 domain; it reads IVGGFNCEKN…FTSWIKDTMA (234 aa). Disulfide bonds link Cys31–Cys173, Cys50–Cys66, Cys152–Cys219, Cys184–Cys198, and Cys209–Cys234. His65 functions as the Charge relay system in the catalytic mechanism. Residue Asn102 is glycosylated (N-linked (GlcNAc...) asparagine). The active-site Charge relay system is Asp120. The active-site Charge relay system is Ser213.

This sequence belongs to the peptidase S1 family. Kallikrein subfamily. As to expression, expressed in testis and submaxillary gland. In the testis, expression localized specifically to Leydig cells in the interstitial tissues.

It carries out the reaction Preferential cleavage of Arg-|-Xaa bonds in small molecule substrates. Highly selective action to release kallidin (lysyl-bradykinin) from kininogen involves hydrolysis of Met-|-Xaa or Leu-|-Xaa.. Its activity is regulated as follows. Inhibited by protease inhibitors diisopropylfluorophosphate, leupeptin, antipain, benzamidine, phenylmethylsulfonyl fluoride and soybean trypsin inhibitor. In terms of biological role, glandular kallikreins cleave Met-Lys and Arg-Ser bonds in kininogen to release Lys-bradykinin. Displays trypsin-like substrate specificity and shows activity towards casein, gelatin, fibronectin and IGFBP3. The polypeptide is Kallikrein 1-related peptidase b21 (Klk1b21) (Mus musculus (Mouse)).